The primary structure comprises 441 residues: Ribosomal protein uS12 methylthiotransferase RimO (441 aa).

The 111-residue stretch at 8–118 folds into the MTTase N-terminal domain; sequence PKIGFVSLGC…VLQHVHHYVP (111 aa). Residues Cys17, Cys53, Cys82, Cys150, Cys154, and Cys157 each contribute to the [4Fe-4S] cluster site. Positions 136–373 constitute a Radical SAM core domain; the sequence is LTPRHYAYLK…MQLQQQISAE (238 aa). The 66-residue stretch at 376–441 folds into the TRAM domain; that stretch reads QEKVGREILV…DEYDLWGSRV (66 aa).

Belongs to the methylthiotransferase family. RimO subfamily. It depends on [4Fe-4S] cluster as a cofactor.

It is found in the cytoplasm. It carries out the reaction L-aspartate(89)-[ribosomal protein uS12]-hydrogen + (sulfur carrier)-SH + AH2 + 2 S-adenosyl-L-methionine = 3-methylsulfanyl-L-aspartate(89)-[ribosomal protein uS12]-hydrogen + (sulfur carrier)-H + 5'-deoxyadenosine + L-methionine + A + S-adenosyl-L-homocysteine + 2 H(+). In terms of biological role, catalyzes the methylthiolation of an aspartic acid residue of ribosomal protein uS12. In Salmonella heidelberg (strain SL476), this protein is Ribosomal protein uS12 methylthiotransferase RimO.